Reading from the N-terminus, the 190-residue chain is Putative serine carboxypeptidase-like 54 (190 aa).

A signal peptide spans 1–25; sequence MATKTFSLPFLLIVCIFSQLSSTFG. N-linked (GlcNAc...) asparagine glycans are attached at residues asparagine 58, asparagine 59, and asparagine 105.

This sequence belongs to the peptidase S10 family.

The protein localises to the secreted. In Arabidopsis thaliana (Mouse-ear cress), this protein is Putative serine carboxypeptidase-like 54 (SCPL54).